We begin with the raw amino-acid sequence, 118 residues long: Crustacean hyperglycemic hormones 2 (118 aa).

The signal sequence occupies residues 1-22 (MTAFRLVAVALVVVVACSTTWA). Disulfide bonds link Cys-51-Cys-87, Cys-67-Cys-83, and Cys-70-Cys-96. At Val-116 the chain carries Valine amide.

It belongs to the arthropod CHH/MIH/GIH/VIH hormone family.

The protein localises to the secreted. Functionally, hormone found in the sinus gland of isopods and decapods which controls the blood sugar level. Has a secretagogue action over the amylase released from the midgut gland. May act as a stress hormone and may be involved in the control of molting and reproduction. The chain is Crustacean hyperglycemic hormones 2 (CHH2) from Penaeus monodon (Giant tiger prawn).